The primary structure comprises 272 residues: Phosphate import ATP-binding protein PstB (272 aa).

One can recognise an ABC transporter domain in the interval 26 to 267; it reads LEIRNLDLSY…PRKRKTEDYI (242 aa). 58–65 provides a ligand contact to ATP; the sequence is GPSGCGKS.

Belongs to the ABC transporter superfamily. Phosphate importer (TC 3.A.1.7) family. As to quaternary structure, the complex is composed of two ATP-binding proteins (PstB), two transmembrane proteins (PstC and PstA) and a solute-binding protein (PstS).

It localises to the cell inner membrane. It catalyses the reaction phosphate(out) + ATP + H2O = ADP + 2 phosphate(in) + H(+). Functionally, part of the ABC transporter complex PstSACB involved in phosphate import. Responsible for energy coupling to the transport system. This is Phosphate import ATP-binding protein PstB from Shewanella denitrificans (strain OS217 / ATCC BAA-1090 / DSM 15013).